A 194-amino-acid polypeptide reads, in one-letter code: Oligoribonuclease (194 aa).

Positions 11 to 174 constitute an Exonuclease domain; sequence LIWIDLEMTG…SDVRDSIDEL (164 aa). Tyrosine 132 is a catalytic residue.

Belongs to the oligoribonuclease family.

Its subcellular location is the cytoplasm. 3'-to-5' exoribonuclease specific for small oligoribonucleotides. The sequence is that of Oligoribonuclease from Xanthomonas campestris pv. campestris (strain ATCC 33913 / DSM 3586 / NCPPB 528 / LMG 568 / P 25).